Consider the following 947-residue polypeptide: MAGKARVHELAKELGVTSKEVLARLSEQGEFVKSASSTVEAPVARRLRESFGGGKSAPAKGSDTGAAKGVAKAPQKVPGVSPAAKAPDRSLDAALDKAVGNGAPAPVPAPAPAPTPAPAPAPAQPADSGVAPPAATPAAPAASAAPAPPKAPLPGQRPAPTPGKPAAPQAPHPGMAPGARPGPVPKPGVRTPRVGNNPFSSAQPVDRPIPRPQAPRPGAPRPGAPRPGGASPGNMPPRPGGASGGPRPPRTGAPRPGGGRPGGPGGGRSDGGGGNYRGGGGGVGAAPGGGFRGRPGGGGGGGRPGQRGGAAGAFGRPGGAPRRGRKSKRAKRAEYENMQAPVVGGVRLPHGNGETIRLARGASLSDFADKINANPAALVQALFNLGEMVTATQSVGDETLELLGSEMNYNVQVVSPEDEDRELLESFDLTYGEDSGDESELQTRPPVVTVMGHVDHGKTRLLDTIRKANVREGEAGGITQHIGAYQVSVDHDGTERLITFIDTPGHEAFTAMRARGAKATDIAILVVAADDGVMPQTVEAINHAQAADVPIVVAVNKIDKEGADPAKIRGQLTEYGLVAEDFGGDTMFVDISAKQGTNIEALEEAVLLTADAALDLRANPDMEAQGVAIEAHLDRGRGPVATVLVQRGTLRVGDSVVAGDAYGRVRRMVDEHGEDVEEALPSRPVQVIGFTSVPGAGDNFLVVDEDRIARQIADRRSARKRNALAARSRKRISLEDLDSALKETSQLNLILKGDNAGTVEALEEALMGIEVDDEVALRVIDRGVGGITETNVNLASASDAIIIGFNVRAEGKATELANREGVEIRYYSVIYQAIDEIEKALRGMLKPIYEEVELGRAEIRALFRSSKVGLIAGCMISSGVVRRNAKARLLRDNIVVVENLSIHSLRREKDDVTEVREGFECGMTLGYSDLKEGDFIESYELVQKDRS.

A disordered region spans residues 47–332 (LRESFGGGKS…RGRKSKRAKR (286 aa)). A compositionally biased stretch (basic and acidic residues) spans 86–95 (APDRSLDAAL). Residues 105–123 (APVPAPAPAPTPAPAPAPA) show a composition bias toward pro residues. Residues 131–145 (APPAATPAAPAASAA) are compositionally biased toward low complexity. 2 stretches are compositionally biased toward pro residues: residues 146 to 171 (PAPP…PQAP) and 210 to 225 (PRPQ…PGAP). Positions 255–318 (RPGGGRPGGP…GAAGAFGRPG (64 aa)) are enriched in gly residues. Over residues 322 to 331 (RRGRKSKRAK) the composition is skewed to basic residues. The tr-type G domain maps to 443–614 (TRPPVVTVMG…AVLLTADAAL (172 aa)). The G1 stretch occupies residues 452 to 459 (GHVDHGKT). 452–459 (GHVDHGKT) contacts GTP. The G2 stretch occupies residues 477–481 (GITQH). The G3 stretch occupies residues 502–505 (DTPG). Residues 502–506 (DTPGH) and 556–559 (NKID) contribute to the GTP site. The segment at 556–559 (NKID) is G4. A G5 region spans residues 592 to 594 (SAK).

This sequence belongs to the TRAFAC class translation factor GTPase superfamily. Classic translation factor GTPase family. IF-2 subfamily.

The protein localises to the cytoplasm. Functionally, one of the essential components for the initiation of protein synthesis. Protects formylmethionyl-tRNA from spontaneous hydrolysis and promotes its binding to the 30S ribosomal subunits. Also involved in the hydrolysis of GTP during the formation of the 70S ribosomal complex. The protein is Translation initiation factor IF-2 of Mycobacterium marinum (strain ATCC BAA-535 / M).